A 314-amino-acid polypeptide reads, in one-letter code: Acetyl-coenzyme A carboxylase carboxyl transferase subunit beta (314 aa).

In terms of domain architecture, CoA carboxyltransferase N-terminal spans 24 to 293; the sequence is LWIKCPDTGQ…IDAAPEPSPA (270 aa). The interval 283–314 is disordered; it reads EIDAAPEPSPAAEEPAEPMPAPEAAAPSAPPA. Composition is skewed to low complexity over residues 284-295 and 304-314; these read IDAAPEPSPAAE and PEAAAPSAPPA.

This sequence belongs to the AccD/PCCB family. In terms of assembly, acetyl-CoA carboxylase is a heterohexamer composed of biotin carboxyl carrier protein (AccB), biotin carboxylase (AccC) and two subunits each of ACCase subunit alpha (AccA) and ACCase subunit beta (AccD).

Its subcellular location is the cytoplasm. The enzyme catalyses N(6)-carboxybiotinyl-L-lysyl-[protein] + acetyl-CoA = N(6)-biotinyl-L-lysyl-[protein] + malonyl-CoA. It participates in lipid metabolism; malonyl-CoA biosynthesis; malonyl-CoA from acetyl-CoA: step 1/1. Functionally, component of the acetyl coenzyme A carboxylase (ACC) complex. Biotin carboxylase (BC) catalyzes the carboxylation of biotin on its carrier protein (BCCP) and then the CO(2) group is transferred by the transcarboxylase to acetyl-CoA to form malonyl-CoA. This Nitrobacter hamburgensis (strain DSM 10229 / NCIMB 13809 / X14) protein is Acetyl-coenzyme A carboxylase carboxyl transferase subunit beta.